The primary structure comprises 293 residues: MAEELKKTTKEKTPVKKSSKVSASKAPTKKVTKTTEVKKADKLEKVSKPKSESTKVSKVSVKSVKTESIKSEPVKTKKSKIKVLSSKTNEAKNILFKNTVSLPKGIFGLSEEKINTQAIFDSILFERASQRQGTHSTKTRSEVSGGGKKPWKQKGTGRARAGSTRSPIWVGGGITFGPKPQKKYDFKINKKVRNLAFLSSLTLLANKNAILVEDLKLEKISSQELIKKLEDLKINNLKKILIVSDDEKIFKSGRNVQNLHVVKLNSLTVELLNETHALLLSKKDLTTLESRVK.

2 stretches are compositionally biased toward basic and acidic residues: residues 1-14 (MAEELKKTTKEKTP) and 33-55 (KTTEVKKADKLEKVSKPKSESTK). 2 disordered regions span residues 1 to 72 (MAEE…IKSE) and 130 to 166 (QRQGTHSTKTRSEVSGGGKKPWKQKGTGRARAGSTRS).

The protein belongs to the universal ribosomal protein uL4 family. As to quaternary structure, part of the 50S ribosomal subunit.

In terms of biological role, one of the primary rRNA binding proteins, this protein initially binds near the 5'-end of the 23S rRNA. It is important during the early stages of 50S assembly. It makes multiple contacts with different domains of the 23S rRNA in the assembled 50S subunit and ribosome. Functionally, forms part of the polypeptide exit tunnel. This Mycoplasma mobile (strain ATCC 43663 / 163K / NCTC 11711) (Mesomycoplasma mobile) protein is Large ribosomal subunit protein uL4.